A 102-amino-acid polypeptide reads, in one-letter code: Large ribosomal subunit protein bL28 (102 aa).

The segment at 1 to 20 (MSRRCELTAKGPQVGHKVSH) is disordered.

It belongs to the bacterial ribosomal protein bL28 family.

The sequence is that of Large ribosomal subunit protein bL28 from Bradyrhizobium sp. (strain ORS 278).